Consider the following 346-residue polypeptide: Methylthioribose-1-phosphate isomerase (346 aa).

Residues 48 to 50 (RGA), Arg-91, and Gln-196 each bind substrate. The Proton donor role is filled by Asp-237. 247–248 (NK) serves as a coordination point for substrate.

It belongs to the eIF-2B alpha/beta/delta subunits family. MtnA subfamily.

The catalysed reaction is 5-(methylsulfanyl)-alpha-D-ribose 1-phosphate = 5-(methylsulfanyl)-D-ribulose 1-phosphate. Its pathway is amino-acid biosynthesis; L-methionine biosynthesis via salvage pathway; L-methionine from S-methyl-5-thio-alpha-D-ribose 1-phosphate: step 1/6. Catalyzes the interconversion of methylthioribose-1-phosphate (MTR-1-P) into methylthioribulose-1-phosphate (MTRu-1-P). The polypeptide is Methylthioribose-1-phosphate isomerase (Thermosipho africanus (strain TCF52B)).